The following is a 1356-amino-acid chain: Kinesin-like protein KIF24 (1356 aa).

The SAM domain occupies 1 to 64 (MASWLYECLC…FQLIKIIKIM (64 aa)). Residues 93–119 (GPRRQLHFDSPSASKDKMANNETGSLS) form a disordered region. Position 102 is a phosphoserine (serine 102). The Kinesin motor domain occupies 218-541 (KIRVCVRKRP…LRYADRVKEL (324 aa)). 308–315 (GQTGAGKT) contacts ATP. A Phosphoserine modification is found at serine 473. The tract at residues 473-702 (SLLALKECIR…PTRGKKVQPV (230 aa)) is interaction with MPHOSPH9. Residues 552–571 (TSQNQTSANASPKRIQSSPV) are compositionally biased toward polar residues. Disordered stretches follow at residues 552–581 (TSQNQTSANASPKRIQSSPVTLPGDKCSPK), 597–664 (PTKV…LCSE), 788–840 (EGRL…STAL), 897–947 (RGAL…HQKP), and 964–998 (VPEQAEGSLSSPSPENGLSFPLSHVAVSGSPDQRD). A Phosphoserine modification is found at serine 579. Threonine 615 bears the Phosphothreonine; by NEK2 mark. Serine 616 bears the Phosphoserine; by NEK2 mark. 3 positions are modified to phosphoserine: serine 640, serine 817, and serine 820. Over residues 640–653 (SPRKGTTRSGHSIK) the composition is skewed to basic residues. Positions 810 to 821 (QAEDLDDSDFSE) are enriched in acidic residues. Over residues 830-840 (QPAMKQGSTAL) the composition is skewed to polar residues. Positions 970-979 (GSLSSPSPEN) are enriched in polar residues. Serine 1008 is modified (phosphoserine). Residues 1109 to 1140 (LSSSPPDNRPSGDLPALSPSPIHQHSPDKLPG) are disordered.

Belongs to the TRAFAC class myosin-kinesin ATPase superfamily. Kinesin family. In terms of assembly, interacts with CCP110, CEP97, TALPID3. Interacts with MPHOSPH9. Expressed in brain, spinal cord, and small intestine.

The protein resides in the cytoplasm. It is found in the cytoskeleton. The protein localises to the microtubule organizing center. It localises to the centrosome. Its subcellular location is the centriole. In terms of biological role, microtubule-dependent motor protein that acts as a negative regulator of ciliogenesis by mediating recruitment of CCP110 to mother centriole in cycling cells, leading to restrict nucleation of cilia at centrioles. Mediates depolymerization of microtubules of centriolar origin, possibly to suppress aberrant cilia formation. Following activation by NEK2 involved in disassembly of primary cilium during G2/M phase but does not disassemble fully formed ciliary axonemes. As cilium assembly and disassembly is proposed to coexist in a dynamic equilibrium may suppress nascent cilium assembly and, potentially, ciliar re-assembly in cells that have already disassembled their cilia ensuring the completion of cilium removal in the later stages of the cell cycle. Plays an important role in recruiting MPHOSPH9, a negative regulator of cilia formation to the distal end of mother centriole. In Mus musculus (Mouse), this protein is Kinesin-like protein KIF24 (Kif24).